Consider the following 493-residue polypeptide: Cytochrome P450 2E1 (493 aa).

F298 to T303 provides a ligand contact to substrate. C437 is a heme binding site.

The protein belongs to the cytochrome P450 family. In terms of assembly, interacts with chaperones HSP70 and HSP90; this interaction is required for initial targeting to mitochondria. Heme is required as a cofactor.

Its subcellular location is the endoplasmic reticulum membrane. The protein resides in the microsome membrane. It localises to the mitochondrion inner membrane. The enzyme catalyses an organic molecule + reduced [NADPH--hemoprotein reductase] + O2 = an alcohol + oxidized [NADPH--hemoprotein reductase] + H2O + H(+). It catalyses the reaction (5Z,8Z,11Z)-eicosatrienoate + reduced [NADPH--hemoprotein reductase] + O2 = 19-hydroxy-(5Z,8Z,11Z)-eicosatrienoate + oxidized [NADPH--hemoprotein reductase] + H2O + H(+). The catalysed reaction is (5Z,8Z,11Z,14Z,17Z)-eicosapentaenoate + reduced [NADPH--hemoprotein reductase] + O2 = 19-hydroxy-(5Z,8Z,11Z,14Z,17Z)-eicosapentaenoate + oxidized [NADPH--hemoprotein reductase] + H2O + H(+). It carries out the reaction (4Z,7Z,10Z,13Z,16Z,19Z)-docosahexaenoate + reduced [NADPH--hemoprotein reductase] + O2 = 21-hydroxy-(4Z,7Z,10Z,13Z,16Z,19Z)-docosahexaenoate + oxidized [NADPH--hemoprotein reductase] + H2O + H(+). The enzyme catalyses dodecanoate + reduced [NADPH--hemoprotein reductase] + O2 = 11-hydroxydodecanoate + oxidized [NADPH--hemoprotein reductase] + H2O + H(+). It catalyses the reaction tetradecanoate + reduced [NADPH--hemoprotein reductase] + O2 = 13-hydroxytetradecanoate + oxidized [NADPH--hemoprotein reductase] + H2O + H(+). The catalysed reaction is 4-nitrophenol + NADPH + O2 + H(+) = 4-nitrocatechol + NADP(+) + H2O. It functions in the pathway lipid metabolism; fatty acid metabolism. The omega-1 hydroxylase activity is stimulated by cytochrome b5. A cytochrome P450 monooxygenase involved in the metabolism of fatty acids. Mechanistically, uses molecular oxygen inserting one oxygen atom into a substrate, and reducing the second into a water molecule, with two electrons provided by NADPH via cytochrome P450 reductase (NADPH--hemoprotein reductase). Catalyzes the hydroxylation of carbon-hydrogen bonds. Hydroxylates fatty acids specifically at the omega-1 position displaying the highest catalytic activity for saturated fatty acids. May be involved in the oxidative metabolism of xenobiotics. The chain is Cytochrome P450 2E1 (CYP2E1) from Mesocricetus auratus (Golden hamster).